The following is a 434-amino-acid chain: Isocitrate lyase (434 aa).

91–93 lines the substrate pocket; it reads SGW. Aspartate 157 provides a ligand contact to Mg(2+). Catalysis depends on cysteine 195, which acts as the Proton acceptor. Substrate contacts are provided by residues 196 to 197, arginine 232, 317 to 321, and threonine 351; these read GH and NCSPS.

This sequence belongs to the isocitrate lyase/PEP mutase superfamily. Isocitrate lyase family. Homotetramer. It depends on Mg(2+) as a cofactor.

The catalysed reaction is D-threo-isocitrate = glyoxylate + succinate. Its pathway is carbohydrate metabolism; glyoxylate cycle; (S)-malate from isocitrate: step 1/2. Involved in the metabolic adaptation in response to environmental changes. Catalyzes the reversible formation of succinate and glyoxylate from isocitrate, a key step of the glyoxylate cycle, which operates as an anaplerotic route for replenishing the tricarboxylic acid cycle during growth on fatty acid substrates. The polypeptide is Isocitrate lyase (aceA) (Salmonella typhimurium (strain LT2 / SGSC1412 / ATCC 700720)).